Reading from the N-terminus, the 86-residue chain is Putative regulatory protein Dvul_2085 (86 aa).

It belongs to the RemA family.

This chain is Putative regulatory protein Dvul_2085, found in Nitratidesulfovibrio vulgaris (strain DP4) (Desulfovibrio vulgaris).